The chain runs to 402 residues: Opaque-phase-specific protein OP4 (402 aa).

A signal peptide spans Met-1–Ala-20. N-linked (GlcNAc...) asparagine glycosylation is found at Asn-140 and Asn-293. The interval Asn-302–Ala-322 is disordered. Positions Ala-304 to Ala-322 are enriched in low complexity.

The sequence is that of Opaque-phase-specific protein OP4 (OPS4) from Candida albicans (strain WO-1) (Yeast).